The chain runs to 278 residues: Elongation factor Ts (278 aa).

The tract at residues 82 to 85 (TDFV) is involved in Mg(2+) ion dislocation from EF-Tu.

Belongs to the EF-Ts family.

It localises to the cytoplasm. Associates with the EF-Tu.GDP complex and induces the exchange of GDP to GTP. It remains bound to the aminoacyl-tRNA.EF-Tu.GTP complex up to the GTP hydrolysis stage on the ribosome. This is Elongation factor Ts (tsf) from Streptomyces coelicolor (strain ATCC BAA-471 / A3(2) / M145).